Consider the following 361-residue polypeptide: Cyclin-dependent kinase 10 (361 aa).

A Protein kinase domain is found at 37–321; that stretch reads FEKLNRIGEG…AGDCLESSYF (285 aa). Residues 43 to 51 and Lys66 each bind ATP; that span reads IGEGTYGIV. Asp161 acts as the Proton acceptor in catalysis. Thr194 is modified (phosphothreonine). The disordered stretch occupies residues 332–361; sequence LMPTFPHHRNKRATPATSLGTESQSRRGRP.

This sequence belongs to the protein kinase superfamily. CMGC Ser/Thr protein kinase family. CDC2/CDKX subfamily. As to quaternary structure, heterodimer with CCNQ, the interaction is required for kinase activity. Interacts with ETS2. Interacts with PRK2.

It localises to the cytoplasm. The protein localises to the cytoskeleton. The protein resides in the cilium basal body. It carries out the reaction L-seryl-[protein] + ATP = O-phospho-L-seryl-[protein] + ADP + H(+). It catalyses the reaction L-threonyl-[protein] + ATP = O-phospho-L-threonyl-[protein] + ADP + H(+). Its function is as follows. Cyclin-dependent kinase that phosphorylates the transcription factor ETS2 (in vitro) and positively controls its proteasomal degradation (in cells). Involved in the regulation of actin cytoskeleton organization through the phosphorylation of actin dynamics regulators such as PKN2. Is a negative regulator of ciliogenesis through phosphorylation of PKN2 and promotion of RhoA signaling. The polypeptide is Cyclin-dependent kinase 10 (CDK10) (Bos taurus (Bovine)).